Consider the following 396-residue polypeptide: DnaJ homolog subfamily A member 1 (396 aa).

The 63-residue stretch at 6–68 folds into the J domain; that stretch reads TYYDVLGVKP…KKRELYDKGG (63 aa). Lys-66 carries the N6-acetyllysine modification. Ser-83 carries the phosphoserine modification. The CR-type zinc-finger motif lies at 120-204; it reads GATRKLALQK…CNGRKIVREK (85 aa). Residues Cys-133, Cys-136, Cys-149, Cys-152, Cys-176, Cys-179, Cys-192, and Cys-195 each coordinate Zn(2+). CXXCXGXG motif repeat units follow at residues 133-140, 149-156, 176-183, and 192-199; these read CDKCEGRG, CPNCRGTG, CMECQGHG, and CKSCNGRK. Position 334 is a phosphoserine (Ser-334). The segment at 351 to 396 is disordered; sequence VEETDEMDQVELVDFDPNQERRRHYNGEAYEDDEHHPRGGVQCQTS. A compositionally biased stretch (acidic residues) spans 352–364; the sequence is EETDEMDQVELVD. Tyr-380 carries the post-translational modification Phosphotyrosine. Cys-393 is modified (cysteine methyl ester). Cys-393 is lipidated: S-farnesyl cysteine. The propeptide at 394-396 is removed in mature form; the sequence is QTS.

Identified in a complex with HSPA1B and BAX. Interacts with RNF207.

It is found in the membrane. Its subcellular location is the cytoplasm. It localises to the microsome. The protein localises to the mitochondrion. The protein resides in the nucleus. It is found in the perinuclear region. Co-chaperone for HSPA8/Hsc70. Plays a role in protein transport into mitochondria via its role as co-chaperone. Functions as co-chaperone for HSPA1B and negatively regulates the translocation of BAX from the cytosol to mitochondria in response to cellular stress, thereby protecting cells against apoptosis. Stimulates ATP hydrolysis, but not the folding of unfolded proteins mediated by HSPA1A (in vitro). Promotes apoptosis in response to cellular stress mediated by exposure to anisomycin or UV. In Pongo abelii (Sumatran orangutan), this protein is DnaJ homolog subfamily A member 1 (DNAJA1).